The sequence spans 459 residues: Cobyrinate a,c-diamide synthase (459 aa).

In terms of domain architecture, GATase cobBQ-type spans 249-446 (RIGMAFDEAF…VHTHFASRPG (198 aa)). Cys332 serves as the catalytic Nucleophile.

Belongs to the CobB/CbiA family. Requires Mg(2+) as cofactor.

The catalysed reaction is cob(II)yrinate + 2 L-glutamine + 2 ATP + 2 H2O = cob(II)yrinate a,c diamide + 2 L-glutamate + 2 ADP + 2 phosphate + 2 H(+). The protein operates within cofactor biosynthesis; adenosylcobalamin biosynthesis; cob(II)yrinate a,c-diamide from sirohydrochlorin (anaerobic route): step 10/10. In terms of biological role, catalyzes the ATP-dependent amidation of the two carboxylate groups at positions a and c of cobyrinate, using either L-glutamine or ammonia as the nitrogen source. This chain is Cobyrinate a,c-diamide synthase, found in Syntrophotalea carbinolica (strain DSM 2380 / NBRC 103641 / GraBd1) (Pelobacter carbinolicus).